Consider the following 136-residue polypeptide: Protein NrdI (136 aa).

This sequence belongs to the NrdI family.

Probably involved in ribonucleotide reductase function. This chain is Protein NrdI, found in Escherichia coli O127:H6 (strain E2348/69 / EPEC).